The sequence spans 408 residues: Phosphopentomutase (408 aa).

Mn(2+) contacts are provided by aspartate 10, aspartate 307, histidine 312, aspartate 348, histidine 349, and histidine 360.

It belongs to the phosphopentomutase family. The cofactor is Mn(2+).

It is found in the cytoplasm. The catalysed reaction is 2-deoxy-alpha-D-ribose 1-phosphate = 2-deoxy-D-ribose 5-phosphate. It carries out the reaction alpha-D-ribose 1-phosphate = D-ribose 5-phosphate. The protein operates within carbohydrate degradation; 2-deoxy-D-ribose 1-phosphate degradation; D-glyceraldehyde 3-phosphate and acetaldehyde from 2-deoxy-alpha-D-ribose 1-phosphate: step 1/2. In terms of biological role, isomerase that catalyzes the conversion of deoxy-ribose 1-phosphate (dRib-1-P) and ribose 1-phosphate (Rib-1-P) to deoxy-ribose 5-phosphate (dRib-5-P) and ribose 5-phosphate (Rib-5-P), respectively. The protein is Phosphopentomutase of Proteus mirabilis (strain HI4320).